Here is a 441-residue protein sequence, read N- to C-terminus: Protein translocase subunit SecY (441 aa).

Helical transmembrane passes span 18-38, 78-98, 124-144, 157-177, 180-200, 215-235, 272-292, 318-338, 382-402, and 403-423; these read ILFT…PSPG, AVGV…TVVI, IALA…GGLL, IFTL…VMWM, LITE…GIAA, GVVF…VVFV, VIPV…TQLI, LVYI…YVSI, IYLG…AGGT, and VQNL…GLDT.

The protein belongs to the SecY/SEC61-alpha family. As to quaternary structure, component of the Sec protein translocase complex. Heterotrimer consisting of SecY, SecE and SecG subunits. The heterotrimers can form oligomers, although 1 heterotrimer is thought to be able to translocate proteins. Interacts with the ribosome. Interacts with SecDF, and other proteins may be involved. Interacts with SecA.

Its subcellular location is the cell membrane. Its function is as follows. The central subunit of the protein translocation channel SecYEG. Consists of two halves formed by TMs 1-5 and 6-10. These two domains form a lateral gate at the front which open onto the bilayer between TMs 2 and 7, and are clamped together by SecE at the back. The channel is closed by both a pore ring composed of hydrophobic SecY resides and a short helix (helix 2A) on the extracellular side of the membrane which forms a plug. The plug probably moves laterally to allow the channel to open. The ring and the pore may move independently. This chain is Protein translocase subunit SecY, found in Mycobacterium bovis (strain ATCC BAA-935 / AF2122/97).